A 142-amino-acid chain; its full sequence is Large ribosomal subunit protein uL11 (142 aa).

The protein belongs to the universal ribosomal protein uL11 family. As to quaternary structure, part of the ribosomal stalk of the 50S ribosomal subunit. Interacts with L10 and the large rRNA to form the base of the stalk. L10 forms an elongated spine to which L12 dimers bind in a sequential fashion forming a multimeric L10(L12)X complex. Post-translationally, one or more lysine residues are methylated.

Functionally, forms part of the ribosomal stalk which helps the ribosome interact with GTP-bound translation factors. This Brucella abortus (strain S19) protein is Large ribosomal subunit protein uL11.